Here is a 155-residue protein sequence, read N- to C-terminus: UBA-like domain-containing protein 1 (155 aa).

Positions lysine 81–arginine 155 are disordered. The span at serine 83–threonine 96 shows a compositional bias: low complexity. Residues alanine 112 to threonine 127 show a composition bias toward polar residues. Residues glutamine 139–arginine 155 show a composition bias toward low complexity.

Belongs to the UBALD family.

This chain is UBA-like domain-containing protein 1 (ubald1), found in Danio rerio (Zebrafish).